Consider the following 225-residue polypeptide: uncharacterized protein (225 aa).

The next 6 membrane-spanning stretches (helical) occupy residues 25–45 (MMLALALIASFVSHFISIPFL), 57–77 (VFLIACAFFVSYSWALVITVA), 83–103 (FIWDGNNWIGILTLTIANFAI), 109–129 (LYFHIFAQIKLRWLWVFSLAT), 135–155 (LLTTLNGLLITPLYWYWFGYV), and 187–207 (IFALYSLFNVIKFTLVSLIGV).

The protein resides in the cell membrane. This is an uncharacterized protein from Mycoplasma pneumoniae (strain ATCC 29342 / M129 / Subtype 1) (Mycoplasmoides pneumoniae).